The chain runs to 220 residues: Fructose-6-phosphate aldolase (220 aa).

The active-site Schiff-base intermediate with substrate is the Lys85.

It belongs to the transaldolase family. Type 3A subfamily. As to quaternary structure, homodecamer.

Its subcellular location is the cytoplasm. It carries out the reaction beta-D-fructose 6-phosphate = dihydroxyacetone + D-glyceraldehyde 3-phosphate. In terms of biological role, catalyzes the reversible formation of fructose 6-phosphate from dihydroxyacetone and D-glyceraldehyde 3-phosphate via an aldolization reaction. In Salmonella typhi, this protein is Fructose-6-phosphate aldolase.